Consider the following 295-residue polypeptide: Ribose-phosphate pyrophosphokinase (295 aa).

ATP contacts are provided by residues 46–48 and 101–102; these read DGE and RQ. Residues His132 and Asp171 each contribute to the Mg(2+) site. Lys194 is an active-site residue. The D-ribose 5-phosphate site is built by Arg196 and Asp220.

It belongs to the ribose-phosphate pyrophosphokinase family. Class III (archaeal) subfamily. It depends on Mg(2+) as a cofactor.

Its subcellular location is the cytoplasm. It carries out the reaction D-ribose 5-phosphate + ATP = 5-phospho-alpha-D-ribose 1-diphosphate + AMP + H(+). It functions in the pathway metabolic intermediate biosynthesis; 5-phospho-alpha-D-ribose 1-diphosphate biosynthesis; 5-phospho-alpha-D-ribose 1-diphosphate from D-ribose 5-phosphate (route I): step 1/1. Its function is as follows. Involved in the biosynthesis of the central metabolite phospho-alpha-D-ribosyl-1-pyrophosphate (PRPP) via the transfer of pyrophosphoryl group from ATP to 1-hydroxyl of ribose-5-phosphate (Rib-5-P). This chain is Ribose-phosphate pyrophosphokinase, found in Methanosarcina mazei (strain ATCC BAA-159 / DSM 3647 / Goe1 / Go1 / JCM 11833 / OCM 88) (Methanosarcina frisia).